Consider the following 429-residue polypeptide: UDP-N-acetylglucosamine 1-carboxyvinyltransferase (429 aa).

K22–N23 is a phosphoenolpyruvate binding site. R102 lines the UDP-N-acetyl-alpha-D-glucosamine pocket. C126 serves as the catalytic Proton donor. At C126 the chain carries 2-(S-cysteinyl)pyruvic acid O-phosphothioketal. UDP-N-acetyl-alpha-D-glucosamine-binding positions include R131–L135, D316, and I338.

It belongs to the EPSP synthase family. MurA subfamily.

It localises to the cytoplasm. It catalyses the reaction phosphoenolpyruvate + UDP-N-acetyl-alpha-D-glucosamine = UDP-N-acetyl-3-O-(1-carboxyvinyl)-alpha-D-glucosamine + phosphate. The protein operates within cell wall biogenesis; peptidoglycan biosynthesis. Its function is as follows. Cell wall formation. Adds enolpyruvyl to UDP-N-acetylglucosamine. This Rhodopseudomonas palustris (strain BisA53) protein is UDP-N-acetylglucosamine 1-carboxyvinyltransferase.